The chain runs to 289 residues: ATP synthase gamma chain (289 aa).

It belongs to the ATPase gamma chain family. F-type ATPases have 2 components, CF(1) - the catalytic core - and CF(0) - the membrane proton channel. CF(1) has five subunits: alpha(3), beta(3), gamma(1), delta(1), epsilon(1). CF(0) has three main subunits: a, b and c.

The protein localises to the cell inner membrane. In terms of biological role, produces ATP from ADP in the presence of a proton gradient across the membrane. The gamma chain is believed to be important in regulating ATPase activity and the flow of protons through the CF(0) complex. The polypeptide is ATP synthase gamma chain (Erwinia tasmaniensis (strain DSM 17950 / CFBP 7177 / CIP 109463 / NCPPB 4357 / Et1/99)).